The following is a 154-amino-acid chain: Protein phosphatase 1 regulatory subunit 27 (154 aa).

ANK repeat units follow at residues Ser-63 to Gln-92 and Ala-96 to Ala-125.

In terms of assembly, interacts with DYSF and PPP1CA.

Inhibits phosphatase activity of protein phosphatase 1 (PP1) complexes. The chain is Protein phosphatase 1 regulatory subunit 27 (PPP1R27) from Homo sapiens (Human).